The following is a 566-amino-acid chain: Membrane protein insertase YidC (566 aa).

Helical transmembrane passes span 3-23 (IKRIILYVIVALLAIALFNAW), 346-366 (GWLWPISMLLFWILSAVHAVV), 369-389 (WGWSIIITTILIKIVFYWFSA), 436-456 (GGCLPMLIQVPVFIAFYYVII), and 509-529 (MWILPVIFTVFFINFPAGLVL).

Belongs to the OXA1/ALB3/YidC family. Type 1 subfamily. Interacts with the Sec translocase complex via SecD. Specifically interacts with transmembrane segments of nascent integral membrane proteins during membrane integration.

The protein localises to the cell inner membrane. Its function is as follows. Required for the insertion and/or proper folding and/or complex formation of integral membrane proteins into the membrane. Involved in integration of membrane proteins that insert both dependently and independently of the Sec translocase complex, as well as at least some lipoproteins. Aids folding of multispanning membrane proteins. This is Membrane protein insertase YidC from Coxiella burnetii (strain RSA 331 / Henzerling II).